A 286-amino-acid polypeptide reads, in one-letter code: Prohibitin-2, mitochondrial (286 aa).

At 1 to 13 (MSFNKVPNIPGAP) the chain is on the mitochondrial matrix side. A helical; Signal-anchor for type II membrane protein membrane pass occupies residues 14 to 32 (ALSALLKVSVIGGLGVYAL). Topologically, residues 33-286 (TNSLYNVDGG…LQEMNLEPKK (254 aa)) are mitochondrial intermembrane. Positions 186 to 219 (KEFTAAIEAKQVAAQEAERAKFIVEKAEQDRRSA) form a coiled coil.

Belongs to the prohibitin family. Component of a prohibitin multimeric complex in mitochondrial membranes. As to expression, mostly expressed in proliferative tissues, including vasculature, shoot and root apical tissues.

The protein resides in the mitochondrion inner membrane. Prohibitin probably acts as a holdase/unfoldase for the stabilization of newly synthesized mitochondrial proteins. This chain is Prohibitin-2, mitochondrial (PHB2), found in Arabidopsis thaliana (Mouse-ear cress).